A 970-amino-acid chain; its full sequence is Sodium/calcium exchanger 1 (970 aa).

The first 32 residues, Met1–Ala32, serve as a signal peptide directing secretion. The Extracellular portion of the chain corresponds to Glu33–Lys71. A glycan (N-linked (GlcNAc...) asparagine) is linked at Asn41. A helical membrane pass occupies residues Ile72 to Ile92. The Cytoplasmic portion of the chain corresponds to Ala93–Asn133. A helical membrane pass occupies residues Leu134 to Cys154. The stretch at Ala138 to Ile178 is one Alpha-1 repeat. Residues Gly155 to Thr167 are Extracellular-facing. Asn157 carries N-linked (GlcNAc...) asparagine glycosylation. A helical transmembrane segment spans residues Ile168–Pro188. Residues Asp189–Phe201 lie on the Cytoplasmic side of the membrane. The chain crosses the membrane as a helical span at residues Phe202 to Ile222. Residues Ser223–Glu228 lie on the Extracellular side of the membrane. A helical membrane pass occupies residues Val229–Ala249. Residues Asp250–Gly797 lie on the Cytoplasmic side of the membrane. The putative calmodulin-binding region stretch occupies residues Arg251–Gly270. Phosphoserine occurs at positions 282 and 389. 2 Calx-beta domains span residues Val393–Ser493 and Ala524–Gly624. Glu417, Asp453, Asp478, Asp479, Ile481, Glu483, Glu486, Asp530, Asp531, Asp532, Glu548, Asp584, Asp610, Glu611, Glu612, and Glu715 together coordinate Ca(2+). The helical transmembrane segment at Trp798 to Leu818 threads the bilayer. At Ala819–His821 the chain is on the extracellular side. The helical transmembrane segment at Phe822–Thr842 threads the bilayer. Residues Ala839–Val875 form an Alpha-2 repeat. The Cytoplasmic segment spans residues Ser843–Asn871. Residues Ala872 to Ala892 traverse the membrane as a helical segment. Topologically, residues Asn893 to Thr903 are extracellular. The chain crosses the membrane as a helical span at residues Leu904–Tyr924. Residues Arg925–Lys941 lie on the Cytoplasmic side of the membrane. Residues Leu942–Glu962 form a helical membrane-spanning segment. Residues Ala963–Phe970 lie on the Extracellular side of the membrane.

The protein belongs to the Ca(2+):cation antiporter (CaCA) (TC 2.A.19) family. SLC8 subfamily.

Its subcellular location is the cell membrane. It carries out the reaction Ca(2+)(in) + 3 Na(+)(out) = Ca(2+)(out) + 3 Na(+)(in). Its activity is regulated as follows. Activated by micromolar levels of Ca(2+). Its function is as follows. Mediates the exchange of one Ca(2+) ion against three to four Na(+) ions across the cell membrane, and thereby contributes to the regulation of cytoplasmic Ca(2+) levels and Ca(2+)-dependent cellular processes. Contributes to Ca(2+) transport during excitation-contraction coupling in muscle. In a first phase, voltage-gated channels mediate the rapid increase of cytoplasmic Ca(2+) levels due to release of Ca(2+) stores from the endoplasmic reticulum. SLC8A1 mediates the export of Ca(2+) from the cell during the next phase, so that cytoplasmic Ca(2+) levels rapidly return to baseline. Required for normal embryonic heart development and the onset of heart contractions. In Cavia porcellus (Guinea pig), this protein is Sodium/calcium exchanger 1 (SLC8A1).